A 291-amino-acid chain; its full sequence is DNA N6-methyl adenine demethylase (291 aa).

The Fe2OG dioxygenase domain maps to 85–256 (GLTLIHNFLS…RGRRIALTMR (172 aa)). Position 171 to 173 (171 to 173 (LEY)) interacts with 2-oxoglutarate. Positions 184, 186, and 239 each coordinate Fe cation.

The protein belongs to the alkB family. Interacts with top-2; the interaction is required for localization of top-2 to DNA. Also interacts with mtss-1, his-24, ule-3, C18B2.3, pgl-1, ceh-93, mcm-4 and F37C4.5. The cofactor is Fe(2+).

Its subcellular location is the nucleus. The enzyme catalyses an N(6)-methyl-2'-deoxyadenosine in DNA + 2-oxoglutarate + O2 = a 2'-deoxyadenosine in DNA + formaldehyde + succinate + CO2. Dioxygenase that specifically demethylates DNA methylated on the 6th position of adenine (N(6)-methyladenosine) DNA. N(6)-methyladenosine (m6A) DNA is involved in epigenetic transgenerational inheritance. Plays an essential role in DNA replication and repair in the germline during meiosis. Binds to components of the DNA replication machinery such as top-2, and directs their localization to DNA to control DNA replication. The sequence is that of DNA N6-methyl adenine demethylase from Caenorhabditis elegans.